The primary structure comprises 155 residues: Small ribosomal subunit protein uS7c (155 aa).

Belongs to the universal ribosomal protein uS7 family. Part of the 30S ribosomal subunit.

The protein localises to the plastid. It is found in the chloroplast. Its function is as follows. One of the primary rRNA binding proteins, it binds directly to 16S rRNA where it nucleates assembly of the head domain of the 30S subunit. The polypeptide is Small ribosomal subunit protein uS7c (rps7) (Pinus koraiensis (Korean pine)).